The chain runs to 499 residues: Potassium voltage-gated channel subfamily A member 2 (499 aa).

The interval 1 to 26 (MTVATGDPVDEAAALPGHPQDTYDPE) is disordered. Positions 1-125 (MTVATGDPVD…YELGEEAMEM (125 aa)) are tetramerization domain. The Cytoplasmic portion of the chain corresponds to 1–160 (MTVATGDPVD…LLFEYPESSG (160 aa)). Residues 161-182 (PARIIAIVSVMVILISIVSFCL) traverse the membrane as a helical segment. Residues 183-221 (ETLPIFRDENEDMHGGGVTFHTYSNSTIGYQQSTSFTDP) are Extracellular-facing. An N-linked (GlcNAc...) asparagine glycan is attached at Asn207. The helical transmembrane segment at 222-243 (FFIVETLCIIWFSFEFLVRFFA) threads the bilayer. A lipid anchor (S-palmitoyl cysteine) is attached at Cys244. At 244–254 (CPSKAGFFTNI) the chain is on the cytoplasmic side. Residues 255-275 (MNIIDIVAIIPYFITLGTELA) form a helical membrane-spanning segment. Over 276–289 (EKPEDAQQGQQAMS) the chain is Extracellular. The chain crosses the membrane as a helical; Voltage-sensor span at residues 290–310 (LAILRVIRLVRVFRIFKLSRH). The Cytoplasmic portion of the chain corresponds to 311 to 325 (SKGLQILGQTLKASM). Positions 312–325 (KGLQILGQTLKASM) are S4-S5 linker. A helical transmembrane segment spans residues 326 to 347 (RELGLLIFFLFIGVILFSSAVY). Residues 348–361 (FAEADERDSQFPSI) are Extracellular-facing. An intramembrane region (helical) is located at residues 362–373 (PDAFWWAVVSMT). Residues 374 to 379 (TVGYGD) carry the Selectivity filter motif. Residues 374-381 (TVGYGDMV) lie within the membrane without spanning it. Residues 382 to 388 (PTTIGGK) are Extracellular-facing. The helical transmembrane segment at 389 to 417 (IVGSLCAIAGVLTIALPVPVIVSNFNYFY) threads the bilayer. Residues 418–499 (HRETEGEEQA…VNITKMLTDV (82 aa)) are Cytoplasmic-facing. Phosphotyrosine is present on Tyr429. Phosphoserine is present on residues Ser434, Ser440, Ser441, and Ser449. Phosphotyrosine is present on Tyr458. Ser468 is modified (phosphoserine). Residues 497-499 (TDV) carry the PDZ-binding motif.

The protein belongs to the potassium channel family. A (Shaker) (TC 1.A.1.2) subfamily. Kv1.2/KCNA2 sub-subfamily. Homotetramer and heterotetramer with other channel-forming alpha subunits, such as KCNA1, KCNA4, KCNA5, KCNA6 and KCNA7. Channel activity is regulated by interaction with beta subunits, including KCNAB1 and KCNAB2. Identified in a complex with KCNA1 and KCNAB2. Identified in a complex with KCNA5 and KCNAB1. Identified in a complex with KCNA4 and FYN. Interacts with PTK2B. Interacts (via C-terminus) with CTTN. Interacts with ADAM22. Interacts with CNTNAP2. Interacts (via C-terminus) with the PDZ domains of DLG1, DLG2 and DLG4. Interacts (via N-terminal cytoplasmic domain) with RHOA (GTP-bound form); this regulates channel activity by reducing location at the cell surface in response to CHRM1 activation. Interacts with DRD2. Interacts with SIGMAR1; cocaine consumption leads to increased interaction. Interacts with ADAM11. Interacts with LYNX1. Post-translationally, phosphorylated on tyrosine residues; phosphorylation increases in response to ischemia. Phosphorylated on tyrosine residues by activated PTK2B/PYK2. Phosphorylation on tyrosine residues suppresses ion channel activity. Phosphorylated on tyrosine residues in response to CHRM1 activation; this abolishes interaction with CTTN. This is probably due to endocytosis of the phosphorylated channel subunits. Phosphorylated on serine residues in response to increased cAMP levels; phosphorylation is apparently not catalyzed by PKA. In terms of processing, N-glycosylated, with complex, sialylated N-glycans. In terms of tissue distribution, detected in brain. Detected in cerebellum. Detected in mitral cells in the olfactory bulb. Detected in cochlea. Detected in cerebellum, particularly in the basket cell axon plexus and in the terminal regions around Purkinje cells (at protein level). Detected in juxtaparanodal regions in sciatic nerve. Detected in Schwann cells from sciatic nerve. Detected in dopamine neurons in substantia nigra. Detected in large myelinated fibers in juxtaparanodes in the CA3 and CA1 areas of the hippocampus. Detected in brain, in punctae on fiber tracts in brain stem and spinal cord, and on axons in the juxtaparanodal regions of the node of Ranvier (at protein level). Detected in dopamine neurons in the midbrain.

The protein localises to the cell membrane. Its subcellular location is the membrane. It is found in the cell projection. It localises to the axon. The protein resides in the synapse. The protein localises to the endoplasmic reticulum membrane. Its subcellular location is the lamellipodium membrane. It is found in the synaptosome. It localises to the presynaptic cell membrane. The protein resides in the dendrite. The protein localises to the perikaryon. Its subcellular location is the cell junction. It is found in the paranodal septate junction. It catalyses the reaction K(+)(in) = K(+)(out). With respect to regulation, inhibited by 4-aminopyridine (4-AP), dendrotoxin (DTX) and charybdotoxin (CTX), but not by tetraethylammonium (TEA). Inhibited by tityustoxin-K alpha (TsTX-Kalpha), a toxin that is highly specific for KCNA2. Inhibited by maurotoxin. Inhibited by kappaM conotoxins kappaM-RIIIJ and kappaM-RIIIK. In terms of biological role, voltage-gated potassium channel that mediates transmembrane potassium transport in excitable membranes, primarily in the brain and the central nervous system, but also in the cardiovascular system. Prevents aberrant action potential firing and regulates neuronal output. Forms tetrameric potassium-selective channels through which potassium ions pass in accordance with their electrochemical gradient. The channel alternates between opened and closed conformations in response to the voltage difference across the membrane. Can form functional homotetrameric channels and heterotetrameric channels that contain variable proportions of KCNA1, KCNA2, KCNA4, KCNA5, KCNA6, KCNA7, and possibly other family members as well; channel properties depend on the type of alpha subunits that are part of the channel. Channel properties are modulated by cytoplasmic beta subunits that regulate the subcellular location of the alpha subunits and promote rapid inactivation of delayed rectifier potassium channels. In vivo, membranes probably contain a mixture of heteromeric potassium channel complexes, making it difficult to assign currents observed in intact tissues to any particular potassium channel family member. Homotetrameric KCNA2 forms a delayed-rectifier potassium channel that opens in response to membrane depolarization, followed by slow spontaneous channel closure. In contrast, a heteromultimer formed by KCNA2 and KCNA4 shows rapid inactivation. Contributes to the regulation of action potentials in neurons. KCNA2-containing channels play a presynaptic role and prevent hyperexcitability and aberrant action potential firing. Response to toxins that are selective for KCNA1, respectively for KCNA2, suggests that heteromeric potassium channels composed of both KCNA1 and KCNA2 play a role in pacemaking and regulate the output of deep cerebellar nuclear neurons. Response to toxins that are selective for KCNA2-containing potassium channels suggests that in Purkinje cells, dendritic subthreshold KCNA2-containing potassium channels prevent random spontaneous calcium spikes, suppressing dendritic hyperexcitability without hindering the generation of somatic action potentials, and thereby play an important role in motor coordination. KCNA2-containing channels play a role in GABAergic transmission from basket cells to Purkinje cells in the cerebellum, and thereby play an import role in motor coordination. Plays a role in the induction of long-term potentiation of neuron excitability in the CA3 layer of the hippocampus. May function as down-stream effector for G protein-coupled receptors and inhibit GABAergic inputs to basolateral amygdala neurons. May contribute to the regulation of neurotransmitter release, such as gamma-aminobutyric acid (GABA). Contributes to the regulation of the axonal release of the neurotransmitter dopamine. Reduced KCNA2 expression plays a role in the perception of neuropathic pain after peripheral nerve injury, but not acute pain. Plays a role in the regulation of the time spent in non-rapid eye movement (NREM) sleep. The sequence is that of Potassium voltage-gated channel subfamily A member 2 (Kcna2) from Mus musculus (Mouse).